The following is a 429-amino-acid chain: Neuronal pentraxin-2 (429 aa).

The signal sequence occupies residues 1 to 14; the sequence is MLALLTVGVALAVA. Residues Asn146 and Asn187 are each glycosylated (N-linked (GlcNAc...) asparagine). The Pentraxin (PTX) domain occupies 221-422; sequence DAFKVSLPLR…GASKWPVETC (202 aa). Cys251 and Cys311 are joined by a disulfide. Ca(2+) contacts are provided by Asn275, Glu353, Gln354, Asp355, and Gln365. An N-linked (GlcNAc...) asparagine glycan is attached at Asn391.

In terms of assembly, homooligomer or heterooligomer (probably pentamer) with neuronal pentraxin receptor (NPTXR). Ca(2+) is required as a cofactor.

It is found in the secreted. In terms of biological role, likely to play role in the modification of cellular properties that underlie long-term plasticity. Binds to agar matrix in a calcium-dependent manner. This Mus musculus (Mouse) protein is Neuronal pentraxin-2 (Nptx2).